A 317-amino-acid polypeptide reads, in one-letter code: 17-beta-hydroxysteroid dehydrogenase type 6 (317 aa).

The signal sequence occupies residues 1-17; it reads MWFYLVTLVGLYHLLRW. Position 33-57 (33-57) interacts with NAD(+); the sequence is FITGCDSGFGNLLARQLDRRGMRVL. N-linked (GlcNAc...) asparagine glycans are attached at residues asparagine 71 and asparagine 161. Residue serine 164 participates in substrate binding. Tyrosine 176 serves as the catalytic Proton acceptor.

Belongs to the short-chain dehydrogenases/reductases (SDR) family. Detected in liver.

The protein localises to the microsome membrane. It localises to the early endosome membrane. The catalysed reaction is all-trans-retinol--[retinol-binding protein] + NAD(+) = all-trans-retinal--[retinol-binding protein] + NADH + H(+). The enzyme catalyses all-trans-retinol + NAD(+) = all-trans-retinal + NADH + H(+). It catalyses the reaction androsterone + NAD(+) = 5alpha-androstan-3,17-dione + NADH + H(+). It carries out the reaction testosterone + NAD(+) = androst-4-ene-3,17-dione + NADH + H(+). The catalysed reaction is 5alpha-androstane-3alpha,17beta-diol + NAD(+) = 17beta-hydroxy-5alpha-androstan-3-one + NADH + H(+). The enzyme catalyses 17beta-estradiol + NAD(+) = estrone + NADH + H(+). It catalyses the reaction 17beta-estradiol + NADP(+) = estrone + NADPH + H(+). It carries out the reaction 3alpha-hydroxy-5alpha-pregnan-20-one + NAD(+) = 5alpha-pregnane-3,20-dione + NADH + H(+). The catalysed reaction is 5alpha-androstane-3beta,17beta-diol + NAD(+) = 17beta-hydroxy-5alpha-androstan-3-one + NADH + H(+). The enzyme catalyses 3beta-hydroxy-5alpha-androstan-17-one + NAD(+) = 5alpha-androstan-3,17-dione + NADH + H(+). Its activity is regulated as follows. Inhibited by carbenoxolone and phenyl arsenoxide. In terms of biological role, NAD-dependent oxidoreductase with broad substrate specificity that shows both oxidative and reductive activity (in vitro). Has 17-beta-hydroxysteroid dehydrogenase activity towards various steroids (in vitro). Converts 5-alpha-androstan-3-alpha,17-beta-diol to androsterone and estradiol to estrone (in vitro). Has 3-alpha-hydroxysteroid dehydrogenase activity towards androsterone (in vitro). Has retinol dehydrogenase activity towards all-trans-retinol (in vitro). This chain is 17-beta-hydroxysteroid dehydrogenase type 6 (Hsd17b6), found in Mus musculus (Mouse).